An 873-amino-acid chain; its full sequence is Rho GTPase-activating protein gacJJ (873 aa).

The segment at 64-147 is disordered; the sequence is DEPSSINTSS…NVNNSSNAPT (84 aa). Low complexity predominate over residues 66–91; it reads PSSINTSSGNIGSNNNSSSNTPLTGS. Residues 103–112 are compositionally biased toward gly residues; that stretch reads IGGGGGGGDN. Over residues 113–144 the composition is skewed to low complexity; that stretch reads GITNSGNIGSSSNSDLKKSTSSGIVNVNNSSN. One can recognise a PH domain in the interval 301–402; that stretch reads NPVREGYLKK…WTVLPIVIES (102 aa). The region spanning 428–621 is the Rho-GAP domain; that stretch reads VPIEKTVSGN…SLIRDYQYIF (194 aa). In terms of domain architecture, SH3 spans 628 to 694; it reads EQKILAKSLY…PASYVELLPH (67 aa). The stretch at 715–761 forms a coiled coil; sequence MLEMESTKTKNQEIDKNIKQLEITKKELESTINDLENEKAALENDPT.

The protein localises to the cytoplasm. In terms of biological role, rho GTPase-activating protein involved in the signal transduction pathway. The polypeptide is Rho GTPase-activating protein gacJJ (gacJJ) (Dictyostelium discoideum (Social amoeba)).